The following is a 728-amino-acid chain: Catalase-peroxidase (728 aa).

Residues Met1–Asp26 are disordered. A cross-link (tryptophyl-tyrosyl-methioninium (Trp-Tyr) (with M-244)) is located at residues Trp96–Tyr218. The Proton acceptor role is filled by His97. A cross-link (tryptophyl-tyrosyl-methioninium (Tyr-Met) (with W-96)) is located at residues Tyr218 to Met244. Heme b is bound at residue His259.

This sequence belongs to the peroxidase family. Peroxidase/catalase subfamily. In terms of assembly, homodimer or homotetramer. It depends on heme b as a cofactor. Formation of the three residue Trp-Tyr-Met cross-link is important for the catalase, but not the peroxidase activity of the enzyme.

The catalysed reaction is H2O2 + AH2 = A + 2 H2O. It carries out the reaction 2 H2O2 = O2 + 2 H2O. Its function is as follows. Bifunctional enzyme with both catalase and broad-spectrum peroxidase activity. Important for stationary phase survival. The sequence is that of Catalase-peroxidase from Rhizobium etli (strain ATCC 51251 / DSM 11541 / JCM 21823 / NBRC 15573 / CFN 42).